The following is an 804-amino-acid chain: Leucine--tRNA ligase (804 aa).

The short motif at P39–H50 is the 'HIGH' region element. A 'KMSKS' region motif is present at residues K580–S584. K583 contributes to the ATP binding site.

The protein belongs to the class-I aminoacyl-tRNA synthetase family.

The protein resides in the cytoplasm. The catalysed reaction is tRNA(Leu) + L-leucine + ATP = L-leucyl-tRNA(Leu) + AMP + diphosphate. The sequence is that of Leucine--tRNA ligase from Mycoplasma capricolum subsp. capricolum (strain California kid / ATCC 27343 / NCTC 10154).